The following is a 194-amino-acid chain: Leucyl/phenylalanyl-tRNA--protein transferase (194 aa).

This sequence belongs to the L/F-transferase family.

It is found in the cytoplasm. It catalyses the reaction N-terminal L-lysyl-[protein] + L-leucyl-tRNA(Leu) = N-terminal L-leucyl-L-lysyl-[protein] + tRNA(Leu) + H(+). The enzyme catalyses N-terminal L-arginyl-[protein] + L-leucyl-tRNA(Leu) = N-terminal L-leucyl-L-arginyl-[protein] + tRNA(Leu) + H(+). It carries out the reaction L-phenylalanyl-tRNA(Phe) + an N-terminal L-alpha-aminoacyl-[protein] = an N-terminal L-phenylalanyl-L-alpha-aminoacyl-[protein] + tRNA(Phe). In terms of biological role, functions in the N-end rule pathway of protein degradation where it conjugates Leu, Phe and, less efficiently, Met from aminoacyl-tRNAs to the N-termini of proteins containing an N-terminal arginine or lysine. The polypeptide is Leucyl/phenylalanyl-tRNA--protein transferase (Chlorobaculum parvum (strain DSM 263 / NCIMB 8327) (Chlorobium vibrioforme subsp. thiosulfatophilum)).